Consider the following 302-residue polypeptide: Deoxyhypusine hydroxylase (302 aa).

Methionine 1 is subject to N-acetylmethionine. HEAT-like PBS-type repeat units follow at residues 54-80, 87-113, 175-201, 206-232, and 239-265; these read LKHE…VLQD, VRHE…YSTD, ERYR…GLQC, FRHE…TLAR, and VRHE…HIED. Histidine 56, histidine 89, and glutamate 90 together coordinate Fe cation. Residues histidine 208, histidine 241, and glutamate 242 each contribute to the Fe cation site.

This sequence belongs to the deoxyhypusine hydroxylase family. Fe(2+) serves as cofactor.

It catalyses the reaction [eIF5A protein]-deoxyhypusine + AH2 + O2 = [eIF5A protein]-hypusine + A + H2O. It functions in the pathway protein modification; eIF5A hypusination. Catalyzes the hydroxylation of the N(6)-(4-aminobutyl)-L-lysine intermediate produced by deoxyhypusine synthase/DHPS on a critical lysine of the eukaryotic translation initiation factor 5A/eIF-5A. This is the second step of the post-translational modification of that lysine into an unusual amino acid residue named hypusine. Hypusination is unique to mature eIF-5A factor and is essential for its function. The polypeptide is Deoxyhypusine hydroxylase (Mus musculus (Mouse)).